We begin with the raw amino-acid sequence, 167 residues long: Leptin (167 aa).

The first 21 residues, 1–21 (MRCGSLCRFLWLWSCLSYIEA), serve as a signal peptide directing secretion. A disulfide bond links Cys-117 and Cys-167.

Belongs to the leptin family.

It localises to the secreted. In terms of biological role, key player in the regulation of energy balance and body weight control. Once released into the circulation, has central and peripheral effects by binding LEPR, found in many tissues, which results in the activation of several major signaling pathways. In the hypothalamus, acts as an appetite-regulating factor that induces a decrease in food intake and an increase in energy consumption by inducing anorexinogenic factors and suppressing orexigenic neuropeptides, also regulates bone mass and secretion of hypothalamo-pituitary-adrenal hormones. In the periphery, increases basal metabolism, influences reproductive function, regulates pancreatic beta-cell function and insulin secretion, is pro-angiogenic for endothelial cell and affects innate and adaptive immunity. In the arcuate nucleus of the hypothalamus, activates by depolarization POMC neurons inducing FOS and SOCS3 expression to release anorexigenic peptides and inhibits by hyperpolarization NPY neurons inducing SOCS3 with a consequent reduction on release of orexigenic peptides. In addition to its known satiety inducing effect, has a modulatory role in nutrient absorption. In the intestine, reduces glucose absorption by enterocytes by activating PKC and leading to a sequential activation of p38, PI3K and ERK signaling pathways which exerts an inhibitory effect on glucose absorption. Acts as a growth factor on certain tissues, through the activation of different signaling pathways increases expression of genes involved in cell cycle regulation such as CCND1, via JAK2-STAT3 pathway, or VEGFA, via MAPK1/3 and PI3K-AKT1 pathways. May also play an apoptotic role via JAK2-STAT3 pathway and up-regulation of BIRC5 expression. Pro-angiogenic, has mitogenic activity on vascular endothelial cells and plays a role in matrix remodeling by regulating the expression of matrix metalloproteinases (MMPs) and tissue inhibitors of metalloproteinases (TIMPs). In innate immunity, modulates the activity and function of neutrophils by increasing chemotaxis and the secretion of oxygen radicals. Increases phagocytosis by macrophages and enhances secretion of pro-inflammatory mediators. Increases cytotoxic ability of NK cells. Plays a pro-inflammatory role, in synergy with IL1B, by inducing NOS2 which promotes the production of IL6, IL8 and Prostaglandin E2, through a signaling pathway that involves JAK2, PI3K, MAP2K1/MEK1 and MAPK14/p38. In adaptive immunity, promotes the switch of memory T-cells towards T helper-1 cell immune responses. Increases CD4(+)CD25(-) T-cell proliferation and reduces autophagy during TCR (T-cell receptor) stimulation, through MTOR signaling pathway activation and BCL2 up-regulation. The polypeptide is Leptin (LEP) (Phoca vitulina (Harbor seal)).